The chain runs to 227 residues: ATP synthase F(0) complex subunit a (227 aa).

6 consecutive transmembrane segments (helical) span residues 14–34 (FLGIPLIAIAILIPWMLFPSP), 69–89 (WAMILTALLLFLMTLNLLGLL), 98–118 (QLSMNMALAVPLWLATVLIGM), 139–159 (IPILIIIETISLFIRPLALGV), 165–185 (LTAGHLLIQLISTATFVMLSI), and 189–209 (IATLTFIVLALLTILEIAVAM).

It belongs to the ATPase A chain family. Component of the ATP synthase complex composed at least of ATP5F1A/subunit alpha, ATP5F1B/subunit beta, ATP5MC1/subunit c (homooctomer), MT-ATP6/subunit a, MT-ATP8/subunit 8, ATP5ME/subunit e, ATP5MF/subunit f, ATP5MG/subunit g, ATP5MK/subunit k, ATP5MJ/subunit j, ATP5F1C/subunit gamma, ATP5F1D/subunit delta, ATP5F1E/subunit epsilon, ATP5PF/subunit F6, ATP5PB/subunit b, ATP5PD/subunit d, ATP5PO/subunit OSCP. ATP synthase complex consists of a soluble F(1) head domain (subunits alpha(3) and beta(3)) - the catalytic core - and a membrane F(0) domain - the membrane proton channel (subunits c, a, 8, e, f, g, k and j). These two domains are linked by a central stalk (subunits gamma, delta, and epsilon) rotating inside the F1 region and a stationary peripheral stalk (subunits F6, b, d, and OSCP). Interacts with DNAJC30; interaction is direct.

It localises to the mitochondrion inner membrane. The catalysed reaction is H(+)(in) = H(+)(out). In terms of biological role, subunit a, of the mitochondrial membrane ATP synthase complex (F(1)F(0) ATP synthase or Complex V) that produces ATP from ADP in the presence of a proton gradient across the membrane which is generated by electron transport complexes of the respiratory chain. ATP synthase complex consist of a soluble F(1) head domain - the catalytic core - and a membrane F(1) domain - the membrane proton channel. These two domains are linked by a central stalk rotating inside the F(1) region and a stationary peripheral stalk. During catalysis, ATP synthesis in the catalytic domain of F(1) is coupled via a rotary mechanism of the central stalk subunits to proton translocation. With the subunit c (ATP5MC1), forms the proton-conducting channel in the F(0) domain, that contains two crucial half-channels (inlet and outlet) that facilitate proton movement from the mitochondrial intermembrane space (IMS) into the matrix. Protons are taken up via the inlet half-channel and released through the outlet half-channel, following a Grotthuss mechanism. The polypeptide is ATP synthase F(0) complex subunit a (Polypterus ornatipinnis (Ornate bichir)).